The chain runs to 361 residues: Queuine tRNA-ribosyltransferase (361 aa).

D92 functions as the Proton acceptor in the catalytic mechanism. Substrate is bound by residues D92–F96, D146, Q189, and G216. Residues G247–D253 are RNA binding. D266 (nucleophile) is an active-site residue. Residues T271 to R275 form an RNA binding; important for wobble base 34 recognition region. 4 residues coordinate Zn(2+): C304, C306, C309, and H335.

Belongs to the queuine tRNA-ribosyltransferase family. Homodimer. Within each dimer, one monomer is responsible for RNA recognition and catalysis, while the other monomer binds to the replacement base PreQ1. The cofactor is Zn(2+).

The catalysed reaction is 7-aminomethyl-7-carbaguanine + guanosine(34) in tRNA = 7-aminomethyl-7-carbaguanosine(34) in tRNA + guanine. The protein operates within tRNA modification; tRNA-queuosine biosynthesis. Its function is as follows. Catalyzes the base-exchange of a guanine (G) residue with the queuine precursor 7-aminomethyl-7-deazaguanine (PreQ1) at position 34 (anticodon wobble position) in tRNAs with GU(N) anticodons (tRNA-Asp, -Asn, -His and -Tyr). Catalysis occurs through a double-displacement mechanism. The nucleophile active site attacks the C1' of nucleotide 34 to detach the guanine base from the RNA, forming a covalent enzyme-RNA intermediate. The proton acceptor active site deprotonates the incoming PreQ1, allowing a nucleophilic attack on the C1' of the ribose to form the product. After dissociation, two additional enzymatic reactions on the tRNA convert PreQ1 to queuine (Q), resulting in the hypermodified nucleoside queuosine (7-(((4,5-cis-dihydroxy-2-cyclopenten-1-yl)amino)methyl)-7-deazaguanosine). This is Queuine tRNA-ribosyltransferase from Rickettsia africae (strain ESF-5).